The following is a 596-amino-acid chain: Serine/arginine (SR)-type shuttling mRNA binding protein (596 aa).

Over residues 1 to 11 (MSEVEYNQENT) the composition is skewed to polar residues. Disordered stretches follow at residues 1-83 (MSEV…SRKS) and 244-279 (DREDEVRYGTSPGGPPRGGGRGGLGGSSGRGSFGPP). Composition is skewed to basic and acidic residues over residues 12 to 23 (HYAEVDNFDRDA) and 42 to 66 (SDRRDRDRTDRTDRTDRSDRPRSFN). Positions 182 to 246 (FHRQPSIVYT…RQVFVREDRE (65 aa)) constitute an RRM 1 domain. The segment covering 259–275 (PRGGGRGGLGGSSGRGS) has biased composition (gly residues). Positions 302–379 (TQLFIGNLPF…RMLEVRLDKF (78 aa)) constitute an RRM 2 domain. Residues 458–478 (GYSTRASGPTSARAPAPPAAP) form a disordered region. An RRM 3 domain is found at 480–556 (QQIFVKNLPW…RPLDIEFNRR (77 aa)). Gly residues predominate over residues 563–572 (GGGSVNGGND). The segment at 563–596 (GGGSVNGGNDGNAPMVEVSAQDDEDGDAPVPMQG) is disordered.

Its subcellular location is the nucleus. In terms of biological role, binds to intron-containing transcripts and is involved in quality control for the export of spliced mRNAs from the nucleus. Binds to pre-mRNAs until splicing is completed or until faulty mRNAs are degraded. This is Serine/arginine (SR)-type shuttling mRNA binding protein from Mycosarcoma maydis (Corn smut fungus).